A 174-amino-acid polypeptide reads, in one-letter code: Elongation factor Tu, mitochondrial (174 aa).

62–66 lines the GTP pocket; that stretch reads DCPGH. N6-succinyllysine is present on K78. T103 is modified (phosphothreonine). S121 carries the post-translational modification Phosphoserine. K161 carries the N6-acetyllysine modification.

Belongs to the GTP-binding elongation factor family. EF-Tu/EF-1A subfamily.

The protein localises to the mitochondrion. It catalyses the reaction GTP + H2O = GDP + phosphate + H(+). In terms of biological role, GTP hydrolase that promotes the GTP-dependent binding of aminoacyl-tRNA to the A-site of ribosomes during protein biosynthesis. The sequence is that of Elongation factor Tu, mitochondrial from Mesocricetus auratus (Golden hamster).